Here is a 257-residue protein sequence, read N- to C-terminus: 3-deoxy-manno-octulosonate cytidylyltransferase (257 aa).

Belongs to the KdsB family.

It is found in the cytoplasm. It carries out the reaction 3-deoxy-alpha-D-manno-oct-2-ulosonate + CTP = CMP-3-deoxy-beta-D-manno-octulosonate + diphosphate. The protein operates within nucleotide-sugar biosynthesis; CMP-3-deoxy-D-manno-octulosonate biosynthesis; CMP-3-deoxy-D-manno-octulosonate from 3-deoxy-D-manno-octulosonate and CTP: step 1/1. It functions in the pathway bacterial outer membrane biogenesis; lipopolysaccharide biosynthesis. Its function is as follows. Activates KDO (a required 8-carbon sugar) for incorporation into bacterial lipopolysaccharide in Gram-negative bacteria. The sequence is that of 3-deoxy-manno-octulosonate cytidylyltransferase from Methylococcus capsulatus (strain ATCC 33009 / NCIMB 11132 / Bath).